Consider the following 140-residue polypeptide: Large ribosomal subunit protein bL17 (140 aa).

Belongs to the bacterial ribosomal protein bL17 family. Part of the 50S ribosomal subunit. Contacts protein L32.

This Gluconobacter oxydans (strain 621H) (Gluconobacter suboxydans) protein is Large ribosomal subunit protein bL17.